A 54-amino-acid polypeptide reads, in one-letter code: Ribulose bisphosphate carboxylase large chain (54 aa).

Positions 1–2 (MS) are excised as a propeptide. Residue P3 is modified to N-acetylproline. An N6,N6,N6-trimethyllysine modification is found at K14.

This sequence belongs to the RuBisCO large chain family. Type I subfamily. As to quaternary structure, heterohexadecamer of 8 large chains and 8 small chains.

The protein resides in the plastid. It localises to the chloroplast. The enzyme catalyses 2 (2R)-3-phosphoglycerate + 2 H(+) = D-ribulose 1,5-bisphosphate + CO2 + H2O. It catalyses the reaction D-ribulose 1,5-bisphosphate + O2 = 2-phosphoglycolate + (2R)-3-phosphoglycerate + 2 H(+). Its function is as follows. RuBisCO catalyzes two reactions: the carboxylation of D-ribulose 1,5-bisphosphate, the primary event in carbon dioxide fixation, as well as the oxidative fragmentation of the pentose substrate in the photorespiration process. Both reactions occur simultaneously and in competition at the same active site. The protein is Ribulose bisphosphate carboxylase large chain (rbcL) of Geum borisii (Avens).